Consider the following 103-residue polypeptide: Large ribosomal subunit protein bL21 (103 aa).

Belongs to the bacterial ribosomal protein bL21 family. Part of the 50S ribosomal subunit. Contacts protein L20.

Its function is as follows. This protein binds to 23S rRNA in the presence of protein L20. The chain is Large ribosomal subunit protein bL21 from Polaromonas sp. (strain JS666 / ATCC BAA-500).